Reading from the N-terminus, the 186-residue chain is Elongation factor P (186 aa).

An N6-(3,6-diaminohexanoyl)-5-hydroxylysine modification is found at K33.

Belongs to the elongation factor P family. May be beta-lysylated on the epsilon-amino group of Lys-33 by the combined action of EpmA and EpmB, and then hydroxylated on the C5 position of the same residue by EpmC (if this protein is present). Lysylation is critical for the stimulatory effect of EF-P on peptide-bond formation. The lysylation moiety may extend toward the peptidyltransferase center and stabilize the terminal 3-CCA end of the tRNA. Hydroxylation of the C5 position on Lys-33 may allow additional potential stabilizing hydrogen-bond interactions with the P-tRNA.

The protein resides in the cytoplasm. It functions in the pathway protein biosynthesis; polypeptide chain elongation. Involved in peptide bond synthesis. Alleviates ribosome stalling that occurs when 3 or more consecutive Pro residues or the sequence PPG is present in a protein, possibly by augmenting the peptidyl transferase activity of the ribosome. Modification of Lys-33 is required for alleviation. The protein is Elongation factor P of Acidithiobacillus ferrooxidans (strain ATCC 23270 / DSM 14882 / CIP 104768 / NCIMB 8455) (Ferrobacillus ferrooxidans (strain ATCC 23270)).